We begin with the raw amino-acid sequence, 318 residues long: C1GALT1-specific chaperone 1 (318 aa).

At 1–6 (MLSESS) the chain is on the cytoplasmic side. The chain crosses the membrane as a helical; Signal-anchor for type II membrane protein span at residues 7 to 26 (SFLKGVMLGSIFCALITMLG). Over 27-318 (HIRIGHGSRM…FLPPNGSDND (292 aa)) the chain is Lumenal.

The protein belongs to the glycosyltransferase 31 family. Beta3-Gal-T subfamily. In terms of assembly, associates with core 1 beta-3-galactosyltransferase (C1GALT1), probably not with the soluble active form.

The protein resides in the membrane. Its function is as follows. Probable chaperone required for the generation of 1 O-glycan Gal-beta1-3GalNAc-alpha1-Ser/Thr (T antigen), which is a precursor for many extended O-glycans in glycoproteins. Probably acts as a specific molecular chaperone assisting the folding/stability of core 1 beta-3-galactosyltransferase (C1GALT1). This chain is C1GALT1-specific chaperone 1 (C1GALT1C1), found in Bos taurus (Bovine).